Here is a 961-residue protein sequence, read N- to C-terminus: Thrombospondin-4 (961 aa).

The N-terminal stretch at 1 to 23 (MLAPRGATFLLLHLALQPWLGAG) is a signal peptide. The Laminin G-like domain occupies 24–192 (AQATPQVFDL…LEELKLVVRG (169 aa)). The 40-residue stretch at 286 to 325 (PVRRCDSNPCFRGVRCTDTRDGFQCGPCPEGYTGNGIVCS) folds into the EGF-like 1 domain. Disulfide bonds link cysteine 290/cysteine 301, cysteine 295/cysteine 310, cysteine 313/cysteine 324, cysteine 330/cysteine 341, cysteine 335/cysteine 350, cysteine 353/cysteine 377, cysteine 383/cysteine 394, cysteine 388/cysteine 403, cysteine 406/cysteine 418, cysteine 424/cysteine 438, cysteine 432/cysteine 448, cysteine 450/cysteine 461, cysteine 477/cysteine 482, cysteine 487/cysteine 507, cysteine 523/cysteine 543, cysteine 546/cysteine 566, cysteine 582/cysteine 602, cysteine 605/cysteine 625, cysteine 643/cysteine 663, cysteine 683/cysteine 703, and cysteine 719/cysteine 940. An EGF-like 2; calcium-binding domain is found at 326-363 (DVDECRYHPCYPGVRCVNLAPGFRCDACPVGFTGPMMQ). Residues 379-419 (DIDECRNGACVLNSICINTLGSYRCGPCKPGYIGDQMRGCK) form the EGF-like 3; calcium-binding domain. Positions 420-462 (MERNCRDPELNPCSVNAQCIEERQGDVTCVCGVGWAGDGYICG) constitute an EGF-like 4 domain. 8 TSP type-3 repeats span residues 463–495 (KDVDIDSYPDEELPCSARNCKKDNCKYVPNSGQ), 496–531 (EDADRDGIGDACDDDADGDGILNEQDNCVLTHNVDQ), 532–554 (RNSDKDIFGDACDNCRNVLNNDQ), 555–590 (KDTDGDGKGDACDDDMDGDGIKNILDNCQKVPNSDQ), 591–613 (EDRDGDGVGDACDSCPEVSNPNQ), 614–651 (SDVDNDLVGDSCDTNQDSDGDGHQDSTDNCPTVINSAQ), 652–691 (LDTDKDGIGDECDDDDDNDGIPDLVPPGPDNCRLVPNPAQ), and 692–727 (EDSNSDGVGDICEADFDQDQVIDRIDVCPENAEVTL). A Cell attachment site motif is present at residues 562–564 (KGD). The tract at residues 581–671 (NCQKVPNSDQ…ECDDDDDNDG (91 aa)) is disordered. Asparagine 612 carries an N-linked (GlcNAc...) asparagine glycan. Residues 640-652 (TDNCPTVINSAQL) show a composition bias toward polar residues. The segment covering 660-671 (GDECDDDDDNDG) has biased composition (acidic residues). The 215-residue stretch at 731-945 (RAYQTVVLDP…LKYRCNDTIP (215 aa)) folds into the TSP C-terminal domain. N-linked (GlcNAc...) asparagine glycosylation is present at asparagine 941.

Belongs to the thrombospondin family. As to quaternary structure, homopentamer; disulfide-linked. Interacts with PTBP3. Interacts (via EGF-like 3; calcium-binding domain) with ATF6 and facilitates its processing, activation and nuclear translocation. Interacts with NOTCH1.

The protein localises to the endoplasmic reticulum. It localises to the sarcoplasmic reticulum. Its subcellular location is the secreted. The protein resides in the extracellular space. It is found in the extracellular matrix. In terms of biological role, adhesive glycoprotein that mediates cell-to-cell and cell-to-matrix interactions and is involved in various processes including cellular proliferation, migration, adhesion and attachment, inflammatory response to CNS injury, regulation of vascular inflammation and adaptive responses of the heart to pressure overload and in myocardial function and remodeling. Binds to structural extracellular matrix (ECM) proteins and modulates the ECM in response to tissue damage, contributing to cardioprotective and adaptive ECM remodeling. Plays a role in ER stress response, via its interaction with the activating transcription factor 6 alpha (ATF6) which produces adaptive ER stress response factors and protects myocardium from pressure overload. May contribute to spinal presynaptic hypersensitivity and neuropathic pain states after peripheral nerve injury. May play a role in regulating protective astrogenesis from the subventricular zone (SVZ) niche after injury in a NOTCH1-dependent manner. This chain is Thrombospondin-4 (THBS4), found in Bos taurus (Bovine).